We begin with the raw amino-acid sequence, 466 residues long: ATP synthase subunit beta (466 aa).

ATP is bound at residue 148–155 (GGAGVGKT).

The protein belongs to the ATPase alpha/beta chains family. In terms of assembly, F-type ATPases have 2 components, CF(1) - the catalytic core - and CF(0) - the membrane proton channel. CF(1) has five subunits: alpha(3), beta(3), gamma(1), delta(1), epsilon(1). CF(0) has three main subunits: a(1), b(2) and c(9-12). The alpha and beta chains form an alternating ring which encloses part of the gamma chain. CF(1) is attached to CF(0) by a central stalk formed by the gamma and epsilon chains, while a peripheral stalk is formed by the delta and b chains.

It is found in the cell inner membrane. The enzyme catalyses ATP + H2O + 4 H(+)(in) = ADP + phosphate + 5 H(+)(out). In terms of biological role, produces ATP from ADP in the presence of a proton gradient across the membrane. The catalytic sites are hosted primarily by the beta subunits. The sequence is that of ATP synthase subunit beta from Xylella fastidiosa (strain 9a5c).